A 112-amino-acid polypeptide reads, in one-letter code: DNA-directed RNA polymerases I and III subunit RPAC2 (112 aa).

The protein belongs to the archaeal Rpo11/eukaryotic RPB11/RPC19 RNA polymerase subunit family. Component of the RNA polymerase I (Pol I) and RNA polymerase III (Pol III) complexes consisting of at least 13 and 17 subunits, respectively.

Its subcellular location is the nucleus. DNA-dependent RNA polymerase catalyzes the transcription of DNA into RNA using the four ribonucleoside triphosphates as substrates. Common core component of RNA polymerases I and III which synthesize ribosomal RNA precursors and small RNAs, such as 5S rRNA and tRNAs, respectively. This Danio rerio (Zebrafish) protein is DNA-directed RNA polymerases I and III subunit RPAC2 (polr1d).